Here is a 374-residue protein sequence, read N- to C-terminus: Histidine biosynthesis bifunctional protein HisB (374 aa).

The histidinol-phosphatase stretch occupies residues 1–183; the sequence is MKKKVLFIDR…RVAEFLFAGE (183 aa). Asp9 acts as the Nucleophile in catalysis. Positions 9, 11, and 131 each coordinate Mg(2+). The active-site Proton donor is the Asp11. Residues 184-374 are imidazoleglycerol-phosphate dehydratase; the sequence is RRAEIRRTTK…FELPSSKGVL (191 aa).

In the N-terminal section; belongs to the histidinol-phosphatase family. This sequence in the C-terminal section; belongs to the imidazoleglycerol-phosphate dehydratase family. Requires Mg(2+) as cofactor.

It is found in the cytoplasm. The catalysed reaction is D-erythro-1-(imidazol-4-yl)glycerol 3-phosphate = 3-(imidazol-4-yl)-2-oxopropyl phosphate + H2O. It carries out the reaction L-histidinol phosphate + H2O = L-histidinol + phosphate. Its pathway is amino-acid biosynthesis; L-histidine biosynthesis; L-histidine from 5-phospho-alpha-D-ribose 1-diphosphate: step 6/9. The protein operates within amino-acid biosynthesis; L-histidine biosynthesis; L-histidine from 5-phospho-alpha-D-ribose 1-diphosphate: step 8/9. This is Histidine biosynthesis bifunctional protein HisB from Bacteroides fragilis (strain ATCC 25285 / DSM 2151 / CCUG 4856 / JCM 11019 / LMG 10263 / NCTC 9343 / Onslow / VPI 2553 / EN-2).